The primary structure comprises 95 residues: Small ribosomal subunit protein bS6 (95 aa).

It belongs to the bacterial ribosomal protein bS6 family.

In terms of biological role, binds together with bS18 to 16S ribosomal RNA. The protein is Small ribosomal subunit protein bS6 of Corynebacterium efficiens (strain DSM 44549 / YS-314 / AJ 12310 / JCM 11189 / NBRC 100395).